We begin with the raw amino-acid sequence, 464 residues long: Putative dipeptidase CPC735_014430 (464 aa).

Residues 1 to 34 (MSTMSARDNEKGSARSQPSHAAASEIENVPRPSR) form a disordered region. Residues 40–56 (GTMIKVFIICACAGIVS) traverse the membrane as a helical segment. Positions 93, 95, and 206 each coordinate Zn(2+). Cys-145 and Cys-235 are oxidised to a cystine. A substrate-binding site is contributed by His-233. Zn(2+)-binding residues include His-277 and His-298. Arg-309 and Asp-369 together coordinate substrate. N-linked (GlcNAc...) asparagine glycosylation is present at Asn-382.

The protein belongs to the metallo-dependent hydrolases superfamily. Peptidase M19 family. Zn(2+) serves as cofactor.

The protein resides in the membrane. The catalysed reaction is an L-aminoacyl-L-amino acid + H2O = 2 an L-alpha-amino acid. In terms of biological role, hydrolyzes a wide range of dipeptides. This chain is Putative dipeptidase CPC735_014430, found in Coccidioides posadasii (strain C735) (Valley fever fungus).